A 516-amino-acid chain; its full sequence is Squalene epoxidase 5 (516 aa).

2 consecutive transmembrane segments (helical) span residues 3 to 23 and 45 to 65; these read FTNVCLWTLLAFMLTWTVFYV and ATDVIIVGAGVGGSALAYALA. FAD is bound by residues 55–56, 75–76, Arg-83, Phe-88, Arg-156, Val-172, Asp-335, and Met-348; these read VG and ER. A helical transmembrane segment spans residues 446–466; it reads LIYHLCAITLSSIGHLLSPFP.

It belongs to the squalene monooxygenase family. It depends on FAD as a cofactor. As to expression, expressed in seedlings, leaves, stems and inflorescences. Detected in siliques.

Its subcellular location is the membrane. The enzyme catalyses squalene + reduced [NADPH--hemoprotein reductase] + O2 = (S)-2,3-epoxysqualene + oxidized [NADPH--hemoprotein reductase] + H2O + H(+). It participates in terpene metabolism; lanosterol biosynthesis; lanosterol from farnesyl diphosphate: step 2/3. Catalyzes the stereospecific oxidation of squalene to (S)-2,3-epoxysqualene, and is considered to be a rate-limiting enzyme in steroid biosynthesis. This chain is Squalene epoxidase 5 (SQE5), found in Arabidopsis thaliana (Mouse-ear cress).